The chain runs to 220 residues: Type-4 uracil-DNA glycosylase (220 aa).

The [4Fe-4S] cluster site is built by C14 and C17. Residues 41–43, F55, and N82 each bind uracil; that span reads GEA. Residues C86 and C102 each contribute to the [4Fe-4S] cluster site. Uracil is bound at residue H164.

This sequence belongs to the uracil-DNA glycosylase (UDG) superfamily. Type 4 (UDGa) family.

It carries out the reaction Hydrolyzes single-stranded DNA or mismatched double-stranded DNA and polynucleotides, releasing free uracil.. In terms of biological role, removes uracil bases that are present in DNA as a result of either deamination of cytosine or misincorporation of dUMP instead of dTMP. The polypeptide is Type-4 uracil-DNA glycosylase (Sulfurisphaera tokodaii (strain DSM 16993 / JCM 10545 / NBRC 100140 / 7) (Sulfolobus tokodaii)).